The sequence spans 185 residues: Ribosome-recycling factor (185 aa).

The segment at 143–163 (RKDGEAGEDEVARAEKDLDKS) is disordered.

Belongs to the RRF family.

The protein resides in the cytoplasm. In terms of biological role, responsible for the release of ribosomes from messenger RNA at the termination of protein biosynthesis. May increase the efficiency of translation by recycling ribosomes from one round of translation to another. This Mycobacterium marinum (strain ATCC BAA-535 / M) protein is Ribosome-recycling factor.